A 109-amino-acid polypeptide reads, in one-letter code: uncharacterized protein (109 aa).

This is an uncharacterized protein from Mycoplasma pneumoniae (strain ATCC 29342 / M129 / Subtype 1) (Mycoplasmoides pneumoniae).